Reading from the N-terminus, the 102-residue chain is Co-chaperonin GroES (102 aa).

The protein belongs to the GroES chaperonin family. In terms of assembly, heptamer of 7 subunits arranged in a ring. Interacts with the chaperonin GroEL.

It localises to the cytoplasm. Its function is as follows. Together with the chaperonin GroEL, plays an essential role in assisting protein folding. The GroEL-GroES system forms a nano-cage that allows encapsulation of the non-native substrate proteins and provides a physical environment optimized to promote and accelerate protein folding. GroES binds to the apical surface of the GroEL ring, thereby capping the opening of the GroEL channel. The polypeptide is Co-chaperonin GroES (Chlamydia felis (strain Fe/C-56) (Chlamydophila felis)).